The chain runs to 66 residues: COP-associated protein (66 aa).

The HMA domain occupies 1–66 (MKVTFQVPSI…ALLDAGQEVV (66 aa)). Cysteine 12 and cysteine 15 together coordinate Cu cation.

Functionally, part of a cation-transporting system which is associated with copper export out of the H.pylori cells. The sequence is that of COP-associated protein (copP) from Helicobacter pylori (strain J99 / ATCC 700824) (Campylobacter pylori J99).